The sequence spans 202 residues: Imidazole glycerol phosphate synthase subunit HisH (202 aa).

In terms of domain architecture, Glutamine amidotransferase type-1 spans 3–202 (RIVIIDYGLG…KILRNFVEMC (200 aa)). C79 functions as the Nucleophile in the catalytic mechanism. Residues H183 and E185 contribute to the active site.

In terms of assembly, heterodimer of HisH and HisF.

It is found in the cytoplasm. It carries out the reaction 5-[(5-phospho-1-deoxy-D-ribulos-1-ylimino)methylamino]-1-(5-phospho-beta-D-ribosyl)imidazole-4-carboxamide + L-glutamine = D-erythro-1-(imidazol-4-yl)glycerol 3-phosphate + 5-amino-1-(5-phospho-beta-D-ribosyl)imidazole-4-carboxamide + L-glutamate + H(+). The catalysed reaction is L-glutamine + H2O = L-glutamate + NH4(+). It participates in amino-acid biosynthesis; L-histidine biosynthesis; L-histidine from 5-phospho-alpha-D-ribose 1-diphosphate: step 5/9. Functionally, IGPS catalyzes the conversion of PRFAR and glutamine to IGP, AICAR and glutamate. The HisH subunit catalyzes the hydrolysis of glutamine to glutamate and ammonia as part of the synthesis of IGP and AICAR. The resulting ammonia molecule is channeled to the active site of HisF. In Methanosarcina mazei (strain ATCC BAA-159 / DSM 3647 / Goe1 / Go1 / JCM 11833 / OCM 88) (Methanosarcina frisia), this protein is Imidazole glycerol phosphate synthase subunit HisH.